Here is a 967-residue protein sequence, read N- to C-terminus: LRR receptor-like serine/threonine-protein kinase ERL2 (967 aa).

The N-terminal stretch at 1 to 27 (MRRIETMKGLFFCLGMVVFMLLGSVSP) is a signal peptide. Over 28–585 (MNNEGKALMA…SLPKSQVFTR (558 aa)) the chain is Extracellular. N-linked (GlcNAc...) asparagine glycans are attached at residues asparagine 70 and asparagine 79. LRR repeat units follow at residues 74–97 (NVVSLNLSNLNLGGEISSALGDLM), 98–120 (NLQSIDLQGNKLGGQIPDEIGNC), 122–145 (SLAYVDFSTNLLFGDIPFSISKLK), 146–166 (QLEFLNLKNNQLTGPIPATLT), 170–192 (NLKTLDLARNQLTGEIPRLLYWN), 194–216 (VLQYLGLRGNMLTGTLSPDMCQL), 218–240 (GLWYFDVRGNNLTGTIPESIGNC), 242–261 (SFEILDVSYNQITGVIPYNI), 265–287 (QVATLSLQGNKLTGRIPEVIGLM), 289–311 (ALAVLDLSDNELTGPIPPILGNL), 313–335 (FTGKLYLHGNKLTGQIPPELGNM), 337–359 (RLSYLQLNDNELVGKIPPELGKL), 361–382 (QLFELNLANNNLVGLIPSNISS), 385–406 (ALNQFNVHGNFLSGAVPLEFRN), 409–431 (SLTYLNLSSNSFKGKIPAELGHI), 433–456 (NLDTLDLSGNNFSGSIPLTLGDLE), 457–479 (HLLILNLSRNHLNGTLPAEFGNL), 481–503 (SIQIIDVSFNFLAGVIPTELGQL), 505–527 (NINSLILNNNKIHGKIPDQLTNC), and 529–550 (SLANLNISFNNLSGIIPPMKNF). N-linked (GlcNAc...) asparagine glycosylation is found at asparagine 228 and asparagine 239. 2 N-linked (GlcNAc...) asparagine glycosylation sites follow: asparagine 310 and asparagine 334. Asparagine 379 carries an N-linked (GlcNAc...) asparagine glycan. Asparagine 414, asparagine 443, asparagine 462, and asparagine 469 each carry an N-linked (GlcNAc...) asparagine glycan. Asparagine 534, asparagine 539, and asparagine 549 each carry an N-linked (GlcNAc...) asparagine glycan. A helical membrane pass occupies residues 586-606 (VAVICMVLGFITLICMIFIAV). Topologically, residues 607–967 (YKSKQQKPVL…FREDISKSSL (361 aa)) are cytoplasmic. A phosphothreonine mark is found at threonine 640 and threonine 648. Residues 651-921 (LDEKYIIGYG…EVSRVLLSLV (271 aa)) enclose the Protein kinase domain. ATP contacts are provided by residues 657–665 (IGYGASSTV) and lysine 679. Tyrosine 724 and tyrosine 763 each carry phosphotyrosine. Aspartate 776 acts as the Proton acceptor in catalysis. A Phosphotyrosine modification is found at tyrosine 818. Residue threonine 826 is modified to Phosphothreonine. The segment at 921 to 955 (VPSPPPKKLPSPAKVQEGEERRESHSSDTTTPQWF) is disordered. Residues 936-946 (QEGEERRESHS) show a composition bias toward basic and acidic residues.

It belongs to the protein kinase superfamily. Ser/Thr protein kinase family. Mostly expressed in developing organs, including bud clusters, flowers, siliques and young rosettes. Also detected in mature aboveground organs, such as leaves, stems and pedicels, but barely in roots.

The protein resides in the membrane. It catalyses the reaction L-seryl-[protein] + ATP = O-phospho-L-seryl-[protein] + ADP + H(+). The enzyme catalyses L-threonyl-[protein] + ATP = O-phospho-L-threonyl-[protein] + ADP + H(+). In terms of biological role, receptor kinase that regulates inflorescence architecture and organ shape as well as stomatal patterning, including density and clustering, together with ERL1 and ER. This is LRR receptor-like serine/threonine-protein kinase ERL2 (ERL2) from Arabidopsis thaliana (Mouse-ear cress).